Here is a 115-residue protein sequence, read N- to C-terminus: Cell division topological specificity factor (115 aa).

The tract at residues 89-115 (TGQIQLKEPKNQSEVDSPETEGKDQNS) is disordered.

The protein belongs to the MinE family.

Its function is as follows. Prevents the cell division inhibition by proteins MinC and MinD at internal division sites while permitting inhibition at polar sites. This ensures cell division at the proper site by restricting the formation of a division septum at the midpoint of the long axis of the cell. This is Cell division topological specificity factor from Prochlorococcus marinus (strain NATL2A).